The chain runs to 987 residues: Mediator of RNA polymerase II transcription subunit 24 (987 aa).

6 short sequence motifs (LXXLL motif) span residues 128–132 (LHWLL), 344–348 (LTPLL), 446–450 (LDLLL), 555–559 (LVALL), 786–790 (LPGLL), and 855–859 (LMRLL). Phosphoserine occurs at positions 860 and 871.

This sequence belongs to the Mediator complex subunit 24 family. As to quaternary structure, component of the Mediator complex, which is composed of MED1, MED4, MED6, MED7, MED8, MED9, MED10, MED11, MED12, MED13, MED13L, MED14, MED15, MED16, MED17, MED18, MED19, MED20, MED21, MED22, MED23, MED24, MED25, MED26, MED27, MED29, MED30, MED31, CCNC, CDK8 and CDC2L6/CDK11. The MED12, MED13, CCNC and CDK8 subunits form a distinct module termed the CDK8 module. Mediator containing the CDK8 module is less active than Mediator lacking this module in supporting transcriptional activation. Individual preparations of the Mediator complex lacking one or more distinct subunits have been variously termed ARC, CRSP, DRIP, PC2, SMCC and TRAP. Interacts with AR.

The protein resides in the nucleus. Component of the Mediator complex, a coactivator involved in the regulated transcription of nearly all RNA polymerase II-dependent genes. Mediator functions as a bridge to convey information from gene-specific regulatory proteins to the basal RNA polymerase II transcription machinery. Mediator is recruited to promoters by direct interactions with regulatory proteins and serves as a scaffold for the assembly of a functional preinitiation complex with RNA polymerase II and the general transcription factors. This Rattus norvegicus (Rat) protein is Mediator of RNA polymerase II transcription subunit 24 (Med24).